The chain runs to 452 residues: Glutamyl-tRNA(Gln) amidotransferase subunit A (452 aa).

Active-site charge relay system residues include Lys56 and Ser131. The active-site Acyl-ester intermediate is Ser155.

Belongs to the amidase family. GatA subfamily. In terms of assembly, heterotrimer of A, B and C subunits.

The enzyme catalyses L-glutamyl-tRNA(Gln) + L-glutamine + ATP + H2O = L-glutaminyl-tRNA(Gln) + L-glutamate + ADP + phosphate + H(+). Its function is as follows. Allows the formation of correctly charged Gln-tRNA(Gln) through the transamidation of misacylated Glu-tRNA(Gln) in organisms which lack glutaminyl-tRNA synthetase. The reaction takes place in the presence of glutamine and ATP through an activated gamma-phospho-Glu-tRNA(Gln). The protein is Glutamyl-tRNA(Gln) amidotransferase subunit A of Campylobacter hominis (strain ATCC BAA-381 / DSM 21671 / CCUG 45161 / LMG 19568 / NCTC 13146 / CH001A).